Reading from the N-terminus, the 639-residue chain is Testicular spindle-associated protein SHCBP1L (639 aa).

Disordered stretches follow at residues 1 to 25 (MESD…EQTV) and 48 to 75 (VASP…ETCD). At Ser3 the chain carries O-acetylserine. Phosphoserine occurs at positions 8, 19, and 50. The segment covering 54–63 (VKGKAARRRL) has biased composition (basic residues). Positions 285–312 (IAQRFKKTLEKYKNKRVELIEYQSNIKE) form a coiled coil. 4 PbH1 repeats span residues 479–500 (SGHL…CVLT), 501–523 (GASL…ELYP), 524–557 (GSIA…NMKV), and 560–582 (APKL…SILQ). At Lys556 the chain carries N6-acetyllysine. Position 631 is an N6-acetyllysine (Lys631).

Interacts with HSPA2; this interaction may promote the recruitment of HSPA2 to the spindle. As to expression, expressed in pachytene spermatocytes and elongating spermatids inside the seminiferous tubules. Not detected in ovary (at protein level). Testis-specific.

The protein localises to the cytoplasm. The protein resides in the cytoskeleton. It localises to the spindle. Its function is as follows. Testis-specific spindle-associated factor that plays a role in spermatogenesis. In association with HSPA2, participates in the maintenance of spindle integrity during meiosis in male germ cells. The chain is Testicular spindle-associated protein SHCBP1L from Mus musculus (Mouse).